The chain runs to 183 residues: Translation initiation factor IF-3 (183 aa).

This sequence belongs to the IF-3 family. As to quaternary structure, monomer.

It localises to the cytoplasm. Its function is as follows. IF-3 binds to the 30S ribosomal subunit and shifts the equilibrium between 70S ribosomes and their 50S and 30S subunits in favor of the free subunits, thus enhancing the availability of 30S subunits on which protein synthesis initiation begins. This chain is Translation initiation factor IF-3, found in Pseudomonas entomophila (strain L48).